Consider the following 211-residue polypeptide: Probable cytokinin riboside 5'-monophosphate phosphoribohydrolase LOGL3 (211 aa).

Residues glutamate 84, 102–103, 119–125, and threonine 131 contribute to the substrate site; these read RK and GYGTLEE.

Belongs to the LOG family. In terms of tissue distribution, expressed in roots, leaves, stems, tiller buds, shoot apex, immature inflorescences and flowers.

It catalyses the reaction N(6)-(dimethylallyl)adenosine 5'-phosphate + H2O = N(6)-dimethylallyladenine + D-ribose 5-phosphate. The enzyme catalyses 9-ribosyl-trans-zeatin 5'-phosphate + H2O = trans-zeatin + D-ribose 5-phosphate. Cytokinin-activating enzyme working in the direct activation pathway. Phosphoribohydrolase that converts inactive cytokinin nucleotides to the biologically active free-base forms. This Oryza sativa subsp. japonica (Rice) protein is Probable cytokinin riboside 5'-monophosphate phosphoribohydrolase LOGL3 (LOGL3).